Consider the following 255-residue polypeptide: Geranylgeranylglyceryl phosphate synthase (255 aa).

The Mg(2+) site is built by D34 and T64. Sn-glycerol 1-phosphate contacts are provided by residues Y182 to G188, G213 to G214, and G235 to N236.

It belongs to the GGGP/HepGP synthase family. Group II subfamily. It depends on Mg(2+) as a cofactor.

Its subcellular location is the cytoplasm. It carries out the reaction sn-glycerol 1-phosphate + (2E,6E,10E)-geranylgeranyl diphosphate = sn-3-O-(geranylgeranyl)glycerol 1-phosphate + diphosphate. Its pathway is membrane lipid metabolism; glycerophospholipid metabolism. Prenyltransferase that catalyzes the transfer of the geranylgeranyl moiety of geranylgeranyl diphosphate (GGPP) to the C3 hydroxyl of sn-glycerol-1-phosphate (G1P). This reaction is the first ether-bond-formation step in the biosynthesis of archaeal membrane lipids. This is Geranylgeranylglyceryl phosphate synthase from Saccharolobus solfataricus (strain ATCC 35092 / DSM 1617 / JCM 11322 / P2) (Sulfolobus solfataricus).